The sequence spans 213 residues: Orotate phosphoribosyltransferase (213 aa).

A 5-phospho-alpha-D-ribose 1-diphosphate-binding site is contributed by lysine 26. An orotate-binding site is contributed by 34 to 35; sequence FF. 5-phospho-alpha-D-ribose 1-diphosphate contacts are provided by residues 72–73, arginine 99, lysine 100, lysine 103, histidine 105, and 124–132; these read YK and DDVITAGTA. Threonine 128 and arginine 156 together coordinate orotate.

The protein belongs to the purine/pyrimidine phosphoribosyltransferase family. PyrE subfamily. Homodimer. Requires Mg(2+) as cofactor.

The enzyme catalyses orotidine 5'-phosphate + diphosphate = orotate + 5-phospho-alpha-D-ribose 1-diphosphate. Its pathway is pyrimidine metabolism; UMP biosynthesis via de novo pathway; UMP from orotate: step 1/2. Catalyzes the transfer of a ribosyl phosphate group from 5-phosphoribose 1-diphosphate to orotate, leading to the formation of orotidine monophosphate (OMP). The sequence is that of Orotate phosphoribosyltransferase from Vibrio parahaemolyticus serotype O3:K6 (strain RIMD 2210633).